The chain runs to 113 residues: uncharacterized protein (113 aa).

A Cupin type-2 domain is found at 41-88 (DWHHHPDSDELFIVLEGELLIDFKDKETAVLKANDSLLIPKGTVHRTR).

Belongs to the SchB/CurC family.

This is an uncharacterized protein from Bacillus subtilis (strain 168).